Reading from the N-terminus, the 319-residue chain is MENFEIWVEKYRPRTLDEVVGQDEVIQRLKGYVERKNIPHLLFSGPPGTGKTATAIALARDLFGENWRDNFIEMNASDERGIDVVRHKIKEFARTAPIGGAPFKIIFLDEADALTADAQAALRRTMEMYSKSCRFILSCNYVSRIIEPIQSRCAVFRFKPVPKEAMKKRLLEICEKEGVKITEDGLEALIYISGGDFRKAINALQGAAAIGEVVDADTIYQITATARPEEMTELIQTALKGNFMEARELLDRLMVEYGMSGEDIVAQLFREIISMPIKDSLKVQLIDKLGEVDFRLTEGANERIQLDAYLAYLSTLAKK.

45–52 contributes to the ATP binding site; the sequence is GPPGTGKT.

This sequence belongs to the activator 1 small subunits family. RfcS subfamily. In terms of assembly, heteropentamer composed of four small subunits (RfcS) and one large subunit (RfcL). Both subunits interact with PCNA.

Functionally, part of the RFC clamp loader complex which loads the PCNA sliding clamp onto DNA. The complex possesses DNA-dependent ATPase activity which is further stimulated by PCNA. The sequence is that of Replication factor C small subunit (rfcS) from Archaeoglobus fulgidus (strain ATCC 49558 / DSM 4304 / JCM 9628 / NBRC 100126 / VC-16).